A 323-amino-acid chain; its full sequence is MPVHSREKKENNHDEMEVDYGENEGSTSEEEETESSSVSEEGDSSEMDDEDCERRRMECLDEMSNLEKQFTDLKDQLYKERLSQVDAKLQEVIAGKAPEYLEPLAALQENMQIRTKVAGIYRELCLESVKNKYECEIQASRQHCESEKLLLYDTVQSELEEKIRRLEEDRHSIDITSELWNDELQSRKKRKDPFSPDKKKPVVVSGPYIVYMLQDLDILEDWTTIRKAMATLGPHRVKPEPPVKLEKHLHSARSEEGRLYYDGEWYGRGQTIYIDKKDECPTSAIITTINHDEVWFKRPDGSKSKLYISQLQKGKYSIKHNHN.

Over residues 1–15 (MPVHSREKKENNHDE) the composition is skewed to basic and acidic residues. Positions 1–56 (MPVHSREKKENNHDEMEVDYGENEGSTSEEEETESSSVSEEGDSSEMDDEDCERRR) are disordered. The span at 16–51 (MEVDYGENEGSTSEEEETESSSVSEEGDSSEMDDED) shows a compositional bias: acidic residues. Coiled-coil stretches lie at residues 50-82 (EDCE…KERL) and 147-178 (EKLL…ITSE).

This sequence belongs to the BRMS1 family.

It localises to the nucleus. Involved in the histone deacetylase (HDAC1)-dependent transcriptional repression activity. The sequence is that of Breast cancer metastasis-suppressor 1-like protein (BRMS1L) from Gallus gallus (Chicken).